We begin with the raw amino-acid sequence, 161 residues long: Photosystem I reaction center subunit XI (161 aa).

Helical transmembrane passes span 84–104 (LISTIALVLIATICLSAYGLV) and 126–146 (FTGGFFIGAMGGAVVAFFLLE).

This sequence belongs to the PsaL family.

Its subcellular location is the cellular thylakoid membrane. The protein is Photosystem I reaction center subunit XI of Trichodesmium erythraeum (strain IMS101).